The chain runs to 131 residues: Putative gamma-taxilin 2 (131 aa).

This sequence belongs to the taxilin family.

The sequence is that of Putative gamma-taxilin 2 (TXLNGY) from Pan troglodytes (Chimpanzee).